A 243-amino-acid chain; its full sequence is MLILLPAVDVVDGRAVRLVQGKAGSETEYGSALDAALGWQRDGAEWIHLVDLDAAFGRGSNRELLAEVVGKLDVRVELSGGIRDDDSLAAALATGCARVNLGTAALENPQWCARAIGEHGDKVAVGLDVQIIDGQHRLRGRGWETDGGDLWEVLERLERQGCSRYVVTDVTKDGTLGGPNLDLLGAVADRTDAPVIASGGVSSLDDLRAIATLTGRGVEGAIVGKALYAGRFTLPQALAAVAE.

The Proton acceptor role is filled by Asp-9. Asp-128 functions as the Proton donor in the catalytic mechanism.

It belongs to the HisA/HisF family.

It localises to the cytoplasm. The enzyme catalyses 1-(5-phospho-beta-D-ribosyl)-5-[(5-phospho-beta-D-ribosylamino)methylideneamino]imidazole-4-carboxamide = 5-[(5-phospho-1-deoxy-D-ribulos-1-ylimino)methylamino]-1-(5-phospho-beta-D-ribosyl)imidazole-4-carboxamide. It carries out the reaction N-(5-phospho-beta-D-ribosyl)anthranilate = 1-(2-carboxyphenylamino)-1-deoxy-D-ribulose 5-phosphate. The protein operates within amino-acid biosynthesis; L-histidine biosynthesis; L-histidine from 5-phospho-alpha-D-ribose 1-diphosphate: step 4/9. It functions in the pathway amino-acid biosynthesis; L-tryptophan biosynthesis; L-tryptophan from chorismate: step 3/5. In terms of biological role, involved in both the histidine and tryptophan biosynthetic pathways. The protein is Phosphoribosyl isomerase A of Mycolicibacterium paratuberculosis (strain ATCC BAA-968 / K-10) (Mycobacterium paratuberculosis).